Reading from the N-terminus, the 56-residue chain is Putative 2-Cys peroxiredoxin BAS1 (56 aa).

Belongs to the peroxiredoxin family. AhpC/Prx1 subfamily. Homodimer; disulfide-linked, upon oxidation.

The protein localises to the plastid. It is found in the chloroplast. The enzyme catalyses a hydroperoxide + [thioredoxin]-dithiol = an alcohol + [thioredoxin]-disulfide + H2O. Functionally, thiol-specific peroxidase that catalyzes the reduction of hydrogen peroxide and organic hydroperoxides to water and alcohols, respectively. Plays a role in cell protection against oxidative stress by detoxifying peroxides. May be an antioxidant enzyme particularly in the developing shoot and photosynthesizing leaf. The polypeptide is Putative 2-Cys peroxiredoxin BAS1 (Pinus strobus (Eastern white pine)).